Here is a 329-residue protein sequence, read N- to C-terminus: GTPase Obg (329 aa).

The Obg domain maps to 1-159; that stretch reads MQFIDYAEIE…RWLRLELKLL (159 aa). The OBG-type G domain occupies 160-328; it reads AEVGIIGLPN…LLQIVWQLLD (169 aa). GTP-binding positions include 166–173, 191–195, 213–216, 280–283, and 309–311; these read GLPNAGKS, FTTLV, DIPG, NKMD, and SGV. Mg(2+) is bound by residues Ser-173 and Thr-193.

Belongs to the TRAFAC class OBG-HflX-like GTPase superfamily. OBG GTPase family. As to quaternary structure, monomer. Mg(2+) serves as cofactor.

It is found in the cytoplasm. An essential GTPase which binds GTP, GDP and possibly (p)ppGpp with moderate affinity, with high nucleotide exchange rates and a fairly low GTP hydrolysis rate. Plays a role in control of the cell cycle, stress response, ribosome biogenesis and in those bacteria that undergo differentiation, in morphogenesis control. The polypeptide is GTPase Obg (Rippkaea orientalis (strain PCC 8801 / RF-1) (Cyanothece sp. (strain PCC 8801))).